The primary structure comprises 148 residues: Phage-like element PBSX protein XkdN (148 aa).

This sequence to B.subtilis YqbN.

The sequence is that of Phage-like element PBSX protein XkdN (xkdN) from Bacillus subtilis (strain 168).